The primary structure comprises 656 residues: Protein O1 homolog (656 aa).

A helical transmembrane segment spans residues 544 to 564; sequence FIKKVILANVIFEYIFTLIII.

The protein belongs to the chordopoxvirinae O1 family.

Its subcellular location is the membrane. The sequence is that of Protein O1 homolog from Vertebrata (FPV).